We begin with the raw amino-acid sequence, 310 residues long: N-acetyl-gamma-glutamyl-phosphate reductase (310 aa).

Cys117 is an active-site residue.

The protein belongs to the NAGSA dehydrogenase family. Type 2 subfamily.

The protein localises to the cytoplasm. The enzyme catalyses N-acetyl-L-glutamate 5-semialdehyde + phosphate + NADP(+) = N-acetyl-L-glutamyl 5-phosphate + NADPH + H(+). The protein operates within amino-acid biosynthesis; L-arginine biosynthesis; N(2)-acetyl-L-ornithine from L-glutamate: step 3/4. Catalyzes the NADPH-dependent reduction of N-acetyl-5-glutamyl phosphate to yield N-acetyl-L-glutamate 5-semialdehyde. The sequence is that of N-acetyl-gamma-glutamyl-phosphate reductase from Rhizobium johnstonii (strain DSM 114642 / LMG 32736 / 3841) (Rhizobium leguminosarum bv. viciae).